The sequence spans 58 residues: Apelin receptor early endogenous ligand (58 aa).

Residues Met-1–Ala-22 form the signal peptide.

It belongs to the Elabela/Toddler family. As to quaternary structure, interacts with aplnra and aplnrb. In terms of tissue distribution, expressed ubiquitously during late blastula and gastrula stages and becomes restricted to the lateral mesoderm, endoderm, and anterior and posterior notochord after gastrulation.

The protein localises to the secreted. It is found in the extracellular space. Functionally, peptide hormone that functions as endogenous ligand for the G-protein-coupled apelin receptor (aplnra and/or aplnrb), that plays a role in the regulation of normal cardiovascular function and fluid homeostasis. Functions as a balanced agonist activating both G(i) protein pathway and beta-arrestin pathway of APLNR. Downstream G proteins activation, apelin can inhibit cAMP production and activate key intracellular effectors such as ERKs. On the other hand, APLNR activation induces beta-arrestin recruitment to the membrane leading to desensitization and internalization of the receptor. Required for mesendodermal differentiation, blood vessels formation and heart morphogenesis during early development and for adult cardiovascular homeostasis. Acts as a motogen by promoting mesendodermal cell migration during gastrulation by binding and activating the apelin receptor. Acts as an early embryonic regulator of cellular movement with a role in migration and development of cardiac progenitor cells. May act as a chemoattractant for the activation of angioblast migration toward the embryonic midline, i.e. the position of the future vessel formation, during vasculogenesis. Positively regulates sinus venosus (SV)-derived endothelial cells migration into the developing heart to promote coronary blood vessel sprouting. Involved in cardioprotective functions during heart failure. Mediates myocardial contractility in an ERK1/2-dependent manner. The protein is Apelin receptor early endogenous ligand of Danio rerio (Zebrafish).